Consider the following 732-residue polypeptide: MGSEKDSESPRSTSLHAAAPDPKCRSGGRRRRLTFHSVFSASARGRRARTKPQAEPPPPAAPPPPPPPAPAPVEAQAPPVEALPSEPAAEAEAEAVAAGPEEDEAAEGGGAEEVECPLCLVRLPPERAPRLLSCPHRSCRDCLRHYLRLEISESRVPISCPECSERLNPHDIRLLLADPPLMHKYEEFMLRRYLASDPDCRWCPAPDCGYAVIAYGCASCPKLTCEREGCQTEFCYHCKQIWHPNQTCDMARQQRAQTLRVRTKHTSGLSYGQESGPADDIKPCPRCSAYIIKMNDGSCNHMTCAVCGCEFCWLCMKEISDLHYLSPSGCTFWGKKPWSRKKKILWQLGTLIGAPVGISLIAGIAIPAMVIGIPVYVGRKIHSRYEGRKTSKHKRNLAITGGVTLSVIASPVIAAVSVGIGVPIMLAYVYGVVPISLCRGGGCGVSTANGKGVKIEFDEDDGPITVADAWRALKNPSIGESSIEGLTSVLSTSGSPTDGLSVMQGPYSETASFAALSGGTLSGGILSSGKGKYSRLEVQADVQKEIFPKDTASLGAISDSASTRAMAGSIISSYNPQDRECNNMEIQVDIEAKPSHYQLVSGSSTEDSLHVHAQVAEKEEEGNGAGGGSGGSEDDPPYKHQSCEQKDCLASKAWDISLAQPESIRSDLESSDTQSDDVPDITSDECGSPRSHAAACPSTPQVHGAPSPSAHKNLAAPAEGQTVLKSEEYEVE.

Positions 1–109 are disordered; sequence MGSEKDSESP…PEEDEAAEGG (109 aa). A required for ubiquitin ligase activity and for protection against staurosporin-induced cell death region spans residues 1–315; that stretch reads MGSEKDSESP…VCGCEFCWLC (315 aa). Positions 54-71 are enriched in pro residues; sequence AEPPPPAAPPPPPPPAPA. Over residues 72–99 the composition is skewed to low complexity; that stretch reads PVEAQAPPVEALPSEPAAEAEAEAVAAG. Residues 100–109 are compositionally biased toward acidic residues; sequence PEEDEAAEGG. Residues 112-334 form a TRIAD supradomain region; it reads EEVECPLCLV…LSPSGCTFWG (223 aa). 14 residues coordinate Zn(2+): Cys116, Cys119, Cys139, Cys142, Cys203, Cys208, Cys225, Cys230, Cys235, Cys238, His243, Cys248, Cys284, and Cys287. Residues 116 to 165 form an RING-type 1 zinc finger; that stretch reads CPLCLVRLPPERAPRLLSCPHRSCRDCLRHYLRLEISESRVPISCPECSE. Residues 183–248 form an IBR-type zinc finger; sequence HKYEEFMLRR…KQIWHPNQTC (66 aa). The RING-type 2; atypical zinc-finger motif lies at 284-315; that stretch reads CPRCSAYIIKMNDGSCNHMTCAVCGCEFCWLC. Cys299 is a catalytic residue. Zn(2+) contacts are provided by Cys304, Cys307, Cys312, Cys315, His323, and Cys330. Helical transmembrane passes span 351-371 and 412-432; these read LIGAPVGISLIAGIAIPAMVI and VIAAVSVGIGVPIMLAYVYGV. 2 disordered regions span residues 598–644 and 660–732; these read QLVS…QSCE and QPES…YEVE. Acidic residues predominate over residues 674 to 683; the sequence is QSDDVPDITS.

Belongs to the RBR family. RNF19 subfamily. Interacts with UBE2L3, UBE2L6 and UCKL1. Expressed specifically in natural killer cells, activated macrophages and cytotoxic T-cells. Present in macrophages (at protein level). Ubiquitously expressed with high expression in testis.

The protein localises to the cytoplasmic granule membrane. Its subcellular location is the endoplasmic reticulum membrane. It catalyses the reaction [E2 ubiquitin-conjugating enzyme]-S-ubiquitinyl-L-cysteine + [acceptor protein]-L-lysine = [E2 ubiquitin-conjugating enzyme]-L-cysteine + [acceptor protein]-N(6)-ubiquitinyl-L-lysine.. Its pathway is protein modification; protein ubiquitination. Functionally, E3 ubiquitin-protein ligase which accepts ubiquitin from E2 ubiquitin-conjugating enzymes UBE2L3 and UBE2L6 in the form of a thioester and then directly transfers the ubiquitin to targeted substrates, such as UCKL1. Involved in the cytolytic activity of natural killer cells and cytotoxic T-cells. Protects against staurosporin-induced cell death. In Mus musculus (Mouse), this protein is E3 ubiquitin-protein ligase RNF19B (Rnf19b).